The sequence spans 366 residues: D-alanine--D-alanine ligase (366 aa).

In terms of domain architecture, ATP-grasp spans Lys145–Glu348. Val175–Glu230 lines the ATP pocket. Asp302, Glu315, and Asn317 together coordinate Mg(2+).

This sequence belongs to the D-alanine--D-alanine ligase family. Mg(2+) is required as a cofactor. It depends on Mn(2+) as a cofactor.

Its subcellular location is the cytoplasm. It carries out the reaction 2 D-alanine + ATP = D-alanyl-D-alanine + ADP + phosphate + H(+). It participates in cell wall biogenesis; peptidoglycan biosynthesis. In terms of biological role, cell wall formation. The protein is D-alanine--D-alanine ligase of Proteus mirabilis (strain HI4320).